A 180-amino-acid polypeptide reads, in one-letter code: Chromosome-anchoring protein RacA (180 aa).

Residues T5–Q25 constitute a DNA-binding region (H-T-H motif). Residues H90–E150 are a coiled coil.

Belongs to the RacA family.

It localises to the cytoplasm. Its function is as follows. Required for the formation of axial filaments and for anchoring the origin regions at the cell poles in sporulating cells, thus ensuring proper chromosome segregation in the prespore. Binds in a dispersed manner throughout the chromosome but preferentially to sites clustered in the origin portion of the chromosome, causing condensation of the chromosome and its remodeling into an elongated, anchored structure. In Bacillus anthracis (strain A0248), this protein is Chromosome-anchoring protein RacA.